The primary structure comprises 111 residues: Large ribosomal subunit protein uL22 (111 aa).

This sequence belongs to the universal ribosomal protein uL22 family. In terms of assembly, part of the 50S ribosomal subunit.

Functionally, this protein binds specifically to 23S rRNA; its binding is stimulated by other ribosomal proteins, e.g. L4, L17, and L20. It is important during the early stages of 50S assembly. It makes multiple contacts with different domains of the 23S rRNA in the assembled 50S subunit and ribosome. The globular domain of the protein is located near the polypeptide exit tunnel on the outside of the subunit, while an extended beta-hairpin is found that lines the wall of the exit tunnel in the center of the 70S ribosome. The protein is Large ribosomal subunit protein uL22 of Clostridioides difficile (strain 630) (Peptoclostridium difficile).